Here is a 332-residue protein sequence, read N- to C-terminus: Fructose-1,6-bisphosphatase class 1 (332 aa).

Positions 89, 110, 112, and 113 each coordinate Mg(2+). Residues Asp-113–Ser-116, Asn-206, Tyr-239, Tyr-257–Tyr-259, and Lys-269 contribute to the substrate site. Glu-275 serves as a coordination point for Mg(2+).

Belongs to the FBPase class 1 family. In terms of assembly, homotetramer. It depends on Mg(2+) as a cofactor.

It is found in the cytoplasm. It carries out the reaction beta-D-fructose 1,6-bisphosphate + H2O = beta-D-fructose 6-phosphate + phosphate. It functions in the pathway carbohydrate biosynthesis; gluconeogenesis. The protein is Fructose-1,6-bisphosphatase class 1 of Escherichia coli (strain ATCC 8739 / DSM 1576 / NBRC 3972 / NCIMB 8545 / WDCM 00012 / Crooks).